Reading from the N-terminus, the 316-residue chain is Ribosomal RNA small subunit methyltransferase H (316 aa).

S-adenosyl-L-methionine-binding positions include Ala35 to His37, Asp55, Phe84, Asp105, and Gln112.

Belongs to the methyltransferase superfamily. RsmH family.

It is found in the cytoplasm. It catalyses the reaction cytidine(1402) in 16S rRNA + S-adenosyl-L-methionine = N(4)-methylcytidine(1402) in 16S rRNA + S-adenosyl-L-homocysteine + H(+). Functionally, specifically methylates the N4 position of cytidine in position 1402 (C1402) of 16S rRNA. This chain is Ribosomal RNA small subunit methyltransferase H, found in Streptococcus pneumoniae (strain Taiwan19F-14).